We begin with the raw amino-acid sequence, 1376 residues long: Major capsid protein (1376 aa).

This sequence belongs to the herpesviridae major capsid protein family. In terms of assembly, homomultimer. Makes the hexons and eleven out of twelve pentons. Interacts with triplex proteins 1/TRX1 and 2/TRX2; adjacent capsomers are linked together in groups of three by triplexes, heterotrimeric complexes composed of one molecule of TRX1 and two molecules of TRX2. Interacts with scaffold protein; this interaction allows efficient MCP transport to the host nucleus. Interacts with capsid vertex component 2/CVC2. Interacts with the small capsomere-interacting protein/SCP.

It is found in the virion. It localises to the host nucleus. Self-assembles to form an icosahedral capsid with a T=16 symmetry, about 200 nm in diameter, and consisting of 150 hexons and 12 pentons (total of 162 capsomers). Hexons form the edges and faces of the capsid and are each composed of six MCP molecules. In contrast, one penton is found at each of the 12 vertices. Eleven of the pentons are MCP pentamers, while the last vertex is occupied by the portal complex. The capsid is surrounded by a layer of proteinaceous material designated the tegument which, in turn, is enclosed in an envelope of host cell-derived lipids containing virus-encoded glycoproteins. This is Major capsid protein from Human herpesvirus 8 type P (isolate GK18) (HHV-8).